A 657-amino-acid polypeptide reads, in one-letter code: MTVLDTVTISTCGLAALIREAPDTTLVVDCRGFTEYNESHVRHSMNAFFSKLIRRRLFENKLDDNCLIHQLMSCSSGCTKMDEKLDLVLYAEEDKPRGNKRRIASCNAPESTAKIMRVLRERLEDTDKFRSVMVLEGGFKQFAQQYPQLCESSEGMTRLPQSLSQPCLSQPTGDGITLITPNIYLGSQIDSLDETMLDALDISVVINLSMTCPKSVCIKEDKNFMRIPVNDSYQEKLSPYFPMAYEFLEKCRRAGKKCLIHCLAGISRSPTLAISYIMRYMKMGSDDAYRYVKERRPSISPNFNFMGQLLEYENVLIKDHVLDYNQASRPHRHMDYYGPSDLCPPKVPKSASSNCVFPGSTHDESSPSSPSVSEGSAASEPETSSSAASSSSTASAPPSMPSTSEQGTSSGTVNVNGKRNMTMDLGLPHRPKALGLPSRIGTSVAELPSPSTELSRLSFNGPEAIAPSTPILNFTNPCFNSPIIPVASSSREVILTLPTPAASSSSSTSSEPSFDFSSFESSSSSSIVVENPFFASTEVPAGSSSISTPSGSQSTPASASSSAASRCRMKGFFKVFSKKAPASTSTPASSTPGTSRAARPECLRSSGIIISAPVLAITEEEDAESPESGFNEPEVGEEDDDSVSICSTSSLEIPCHQ.

Positions 21 to 151 (APDTTLVVDC…FAQQYPQLCE (131 aa)) constitute a Rhodanese domain. A Tyrosine-protein phosphatase domain is found at 175–318 (GITLITPNIY…LLEYENVLIK (144 aa)). Cys-262 (phosphocysteine intermediate) is an active-site residue. Disordered stretches follow at residues 353-426 (SNCV…MDLG), 539-563 (VPAG…SSSA), and 581-657 (PAST…PCHQ). Low complexity predominate over residues 366–405 (SPSSPSVSEGSAASEPETSSSAASSSSTASAPPSMPSTSE). The span at 406–419 (QGTSSGTVNVNGKR) shows a compositional bias: polar residues. 2 stretches are compositionally biased toward low complexity: residues 542 to 563 (GSSS…SSSA) and 581 to 597 (PAST…TSRA).

The protein belongs to the protein-tyrosine phosphatase family. Non-receptor class dual specificity subfamily. As to quaternary structure, may interact with pmk-3. In terms of tissue distribution, expressed in the pharynx, intestine, neurons and vulval hypodermal cells.

It catalyses the reaction O-phospho-L-tyrosyl-[protein] + H2O = L-tyrosyl-[protein] + phosphate. Acts preferentially on the c-Jun N-terminal kinase (JNK) and p38 MAPKs. Plays an important role in the heavy metal stress response and in axon regeneration by negatively regulating the kgb-1 (JNK-like) and the pmk-1 (p38-type) MAPK signaling pathways. This Caenorhabditis elegans protein is Tyrosine-protein phosphatase vhp-1 (vhp-1).